Consider the following 145-residue polypeptide: Ribonuclease VapC7 (145 aa).

A PINc domain is found at 2–129; that stretch reads IVLDTTVLVY…PAFADLSDVV (128 aa). D5 and D100 together coordinate Mg(2+).

It belongs to the PINc/VapC protein family. It depends on Mg(2+) as a cofactor.

Its function is as follows. Toxic component of a type II toxin-antitoxin (TA) system. An RNase. The cognate antitoxin is VapB7. The sequence is that of Ribonuclease VapC7 from Mycobacterium tuberculosis (strain ATCC 25618 / H37Rv).